Consider the following 129-residue polypeptide: Small ribosomal subunit protein uS11 (129 aa).

The protein belongs to the universal ribosomal protein uS11 family. Part of the 30S ribosomal subunit. Interacts with proteins S7 and S18. Binds to IF-3.

In terms of biological role, located on the platform of the 30S subunit, it bridges several disparate RNA helices of the 16S rRNA. Forms part of the Shine-Dalgarno cleft in the 70S ribosome. The polypeptide is Small ribosomal subunit protein uS11 (Mesorhizobium japonicum (strain LMG 29417 / CECT 9101 / MAFF 303099) (Mesorhizobium loti (strain MAFF 303099))).